The sequence spans 635 residues: Moesin/ezrin/radixin homolog 2 (635 aa).

Positions 12–305 constitute an FERM domain; the sequence is LSVRVSTFDS…GNHDLYMRRR (294 aa).

As to quaternary structure, interacts with Moe and arm at the adherens junction. Forms a complex with Kibra and Ex. Interacts (via FERM domain) with Sav (via FBM motif). Interacts with Schip1. In terms of tissue distribution, expressed predominantly in the germline. Expressed in the developing oocyte from stage 6 to the end of oogenesis and in the apical ends of follical cells from stage 10. Ubiquitous expression throughout embryogenesis with enhanced expression in mesoderm of early embryos and midgut of late embryos. In embryonic CNS, expression is seen in neuropil and developing brain and is enhanced in neuronal cell bodies. In embryonic PNS, expression is seen within the cell body. In third instar larvae, expression is uniform in the eye imaginal disk and is enhanced at the morphogenetic furrow. In pupal eyes, expression is seen in the cytoplasm of secondary and tertiary pigment cells, bristle precursor cells and rhabdomeres.

It is found in the cell junction. Its subcellular location is the adherens junction. The protein resides in the cell membrane. It localises to the cytoplasm. The protein localises to the cytoskeleton. It is found in the apical cell membrane. Its subcellular location is the cell projection. The protein resides in the rhabdomere. Its function is as follows. Regulator of the Hippo/SWH (Sav/Wts/Hpo) signaling pathway, a signaling pathway that plays a pivotal role in organ size control and tumor suppression by restricting proliferation and promoting apoptosis. The core of this pathway is composed of a kinase cascade wherein Hippo (Hpo), in complex with its regulatory protein Salvador (Sav), phosphorylates and activates Warts (Wts) in complex with its regulatory protein Mats, which in turn phosphorylates and inactivates the Yorkie (Yki) oncoprotein. Mer acts synergistically along with Ex and Kibra to regulate the Hippo signaling pathway. The polypeptide is Moesin/ezrin/radixin homolog 2 (Mer) (Drosophila melanogaster (Fruit fly)).